Here is a 287-residue protein sequence, read N- to C-terminus: Small ribosomal subunit biogenesis GTPase RsgA (287 aa).

The CP-type G domain maps to 63 to 223 (KNLLIRPKVA…VIDTPGFGSL (161 aa)). Residues 113–116 (SKMD) and 166–174 (GQSGVGKST) each bind GTP. Zn(2+)-binding residues include Cys-246, Cys-251, His-253, and Cys-259.

This sequence belongs to the TRAFAC class YlqF/YawG GTPase family. RsgA subfamily. In terms of assembly, monomer. Associates with 30S ribosomal subunit, binds 16S rRNA. It depends on Zn(2+) as a cofactor.

The protein localises to the cytoplasm. Functionally, one of several proteins that assist in the late maturation steps of the functional core of the 30S ribosomal subunit. Helps release RbfA from mature subunits. May play a role in the assembly of ribosomal proteins into the subunit. Circularly permuted GTPase that catalyzes slow GTP hydrolysis, GTPase activity is stimulated by the 30S ribosomal subunit. This chain is Small ribosomal subunit biogenesis GTPase RsgA, found in Malacoplasma penetrans (strain HF-2) (Mycoplasma penetrans).